A 363-amino-acid polypeptide reads, in one-letter code: Phosphoserine aminotransferase (363 aa).

Residue Arg42 participates in L-glutamate binding. Pyridoxal 5'-phosphate is bound by residues Ala76 to Ser77, Trp101, Thr151, Asp170, and Gln193. N6-(pyridoxal phosphate)lysine is present on Lys194. Asn234–Thr235 serves as a coordination point for pyridoxal 5'-phosphate.

It belongs to the class-V pyridoxal-phosphate-dependent aminotransferase family. SerC subfamily. In terms of assembly, homodimer. Requires pyridoxal 5'-phosphate as cofactor.

The protein resides in the cytoplasm. It carries out the reaction O-phospho-L-serine + 2-oxoglutarate = 3-phosphooxypyruvate + L-glutamate. The enzyme catalyses 4-(phosphooxy)-L-threonine + 2-oxoglutarate = (R)-3-hydroxy-2-oxo-4-phosphooxybutanoate + L-glutamate. It participates in amino-acid biosynthesis; L-serine biosynthesis; L-serine from 3-phospho-D-glycerate: step 2/3. Catalyzes the reversible conversion of 3-phosphohydroxypyruvate to phosphoserine and of 3-hydroxy-2-oxo-4-phosphonooxybutanoate to phosphohydroxythreonine. The sequence is that of Phosphoserine aminotransferase from Listeria monocytogenes serovar 1/2a (strain ATCC BAA-679 / EGD-e).